A 104-amino-acid chain; its full sequence is Turripeptide OL55-like (104 aa).

Post-translationally, contains 8 disulfide bonds. In terms of tissue distribution, expressed by the venom duct.

The protein resides in the secreted. Functionally, acts as a neurotoxin by inhibiting an ion channel. The polypeptide is Turripeptide OL55-like (Iotyrris cingulifera (Sea snail)).